A 176-amino-acid polypeptide reads, in one-letter code: NAD(P)H-quinone oxidoreductase subunit 6, chloroplastic (176 aa).

5 consecutive transmembrane segments (helical) span residues 10-30 (FLLVFLGSGIILGGLGVVLLT), 32-52 (PIYSAFSLGFVFICISLFYIL), 61-81 (AQLLIYVGAINVLILFAVMFM), 92-112 (LWTLGDGLTSLICTILFLSLI), and 152-172 (FFLPFELMSIILLVALLGAIA).

The protein belongs to the complex I subunit 6 family. NDH is composed of at least 16 different subunits, 5 of which are encoded in the nucleus.

It localises to the plastid. The protein resides in the chloroplast thylakoid membrane. The catalysed reaction is a plastoquinone + NADH + (n+1) H(+)(in) = a plastoquinol + NAD(+) + n H(+)(out). It catalyses the reaction a plastoquinone + NADPH + (n+1) H(+)(in) = a plastoquinol + NADP(+) + n H(+)(out). Functionally, NDH shuttles electrons from NAD(P)H:plastoquinone, via FMN and iron-sulfur (Fe-S) centers, to quinones in the photosynthetic chain and possibly in a chloroplast respiratory chain. The immediate electron acceptor for the enzyme in this species is believed to be plastoquinone. Couples the redox reaction to proton translocation, and thus conserves the redox energy in a proton gradient. This chain is NAD(P)H-quinone oxidoreductase subunit 6, chloroplastic (ndhG), found in Pelargonium hortorum (Common geranium).